We begin with the raw amino-acid sequence, 555 residues long: Putative ankyrin repeat protein L283 (555 aa).

ANK repeat units lie at residues 364-389, 390-420, 422-447, and 455-488; these read TKVN…EDDI, VFKK…DINE, IKLA…KVRC, and GYLE…EGGK.

In Acanthamoeba polyphaga mimivirus (APMV), this protein is Putative ankyrin repeat protein L283.